The sequence spans 542 residues: Putative leucine aminopeptidase 1 (542 aa).

Mn(2+) is bound by residues Lys294 and Asp299. The active site involves Lys323. 3 residues coordinate Mn(2+): Asp336, Asp396, and Glu398. Arg400 is an active-site residue.

It belongs to the peptidase M17 family. Homohexamer (dimer of homotrimers). Mn(2+) serves as cofactor.

The protein localises to the cytoplasm. It carries out the reaction Release of an N-terminal amino acid, Xaa-|-Yaa-, in which Xaa is preferably Leu, but may be other amino acids including Pro although not Arg or Lys, and Yaa may be Pro. Amino acid amides and methyl esters are also readily hydrolyzed, but rates on arylamides are exceedingly low.. The enzyme catalyses Release of N-terminal proline from a peptide.. Its function is as follows. Presumably involved in the processing and regular turnover of intracellular proteins. Catalyzes the removal of unsubstituted N-terminal amino acids from various peptides. This Oryza sativa subsp. japonica (Rice) protein is Putative leucine aminopeptidase 1.